The primary structure comprises 312 residues: Methionyl-tRNA formyltransferase (312 aa).

Position 109 to 112 (serine 109 to proline 112) interacts with (6S)-5,6,7,8-tetrahydrofolate.

This sequence belongs to the Fmt family.

The catalysed reaction is L-methionyl-tRNA(fMet) + (6R)-10-formyltetrahydrofolate = N-formyl-L-methionyl-tRNA(fMet) + (6S)-5,6,7,8-tetrahydrofolate + H(+). Functionally, attaches a formyl group to the free amino group of methionyl-tRNA(fMet). The formyl group appears to play a dual role in the initiator identity of N-formylmethionyl-tRNA by promoting its recognition by IF2 and preventing the misappropriation of this tRNA by the elongation apparatus. In Listeria monocytogenes serotype 4a (strain HCC23), this protein is Methionyl-tRNA formyltransferase.